A 486-amino-acid chain; its full sequence is Maternal protein exuperantia (486 aa).

2 disordered regions span residues 202–233 and 386–477; these read NARVDNDNEADSNSSSADKHVKNGLQKERDEF and STIR…ISLP. Over residues 218-233 the composition is skewed to basic and acidic residues; sequence ADKHVKNGLQKERDEF. Residues 387–397 show a composition bias toward basic residues; the sequence is TIRRRNKRNTP. Composition is skewed to polar residues over residues 420-437 and 464-476; these read KSQSVSSVPDSTTKTPSP and SALNNTAPASISL.

In terms of biological role, ensures the proper localization of the mRNA of the bicoid gene to the anterior regions of the oocyte thus playing a fundamental role in the establishment of the polarity of the oocyte. May bind the bcd mRNA. The sequence is that of Maternal protein exuperantia (exu) from Drosophila virilis (Fruit fly).